A 151-amino-acid polypeptide reads, in one-letter code: Transcription antitermination protein NusB (151 aa).

The protein belongs to the NusB family.

Functionally, involved in transcription antitermination. Required for transcription of ribosomal RNA (rRNA) genes. Binds specifically to the boxA antiterminator sequence of the ribosomal RNA (rrn) operons. The polypeptide is Transcription antitermination protein NusB (Thermodesulfovibrio yellowstonii (strain ATCC 51303 / DSM 11347 / YP87)).